A 687-amino-acid polypeptide reads, in one-letter code: Tripartite terminase subunit 3 (687 aa).

The tract at residues 67-91 (HHPATPTSANPDVGTPRPSEDNVPA) is disordered. A Walker A motif motif is present at residues 221-228 (IPRRHGKT). The Walker B motif motif lies at 316 to 321 (LLYVDE). Catalysis depends on E321, which acts as the For ATPase activity. Catalysis depends on for nuclease activity residues D476, E550, and D662.

It belongs to the herpesviridae TRM3 protein family. As to quaternary structure, interacts with the terminase subunits TRM1 and TRM2. Interacts with portal protein.

It is found in the host nucleus. Component of the molecular motor that translocates viral genomic DNA in empty capsid during DNA packaging. Forms a tripartite terminase complex together with TRM1 and TRM2 in the host cytoplasm. Once the complex reaches the host nucleus, it interacts with the capsid portal vertex. This portal forms a ring in which genomic DNA is translocated into the capsid. TRM3 carries an RNase H-like nuclease activity that plays an important role for the cleavage of concatemeric viral DNA into unit length genomes. The polypeptide is Tripartite terminase subunit 3 (Human herpesvirus 8 type P (isolate GK18) (HHV-8)).